The sequence spans 149 residues: Large ribosomal subunit protein bL9 (149 aa).

It belongs to the bacterial ribosomal protein bL9 family.

Functionally, binds to the 23S rRNA. The chain is Large ribosomal subunit protein bL9 from Actinobacillus pleuropneumoniae serotype 3 (strain JL03).